A 251-amino-acid polypeptide reads, in one-letter code: Demethylmenaquinone methyltransferase (251 aa).

Residues threonine 66, aspartate 87, and 115–116 (NA) contribute to the S-adenosyl-L-methionine site.

It belongs to the class I-like SAM-binding methyltransferase superfamily. MenG/UbiE family.

The enzyme catalyses a 2-demethylmenaquinol + S-adenosyl-L-methionine = a menaquinol + S-adenosyl-L-homocysteine + H(+). Its pathway is quinol/quinone metabolism; menaquinone biosynthesis; menaquinol from 1,4-dihydroxy-2-naphthoate: step 2/2. Methyltransferase required for the conversion of demethylmenaquinol (DMKH2) to menaquinol (MKH2). This chain is Demethylmenaquinone methyltransferase, found in Symbiobacterium thermophilum (strain DSM 24528 / JCM 14929 / IAM 14863 / T).